Consider the following 387-residue polypeptide: Pyrophosphate--fructose 6-phosphate 1-phosphotransferase 3 (387 aa).

Glycine 15 contacts diphosphate. Aspartate 114 provides a ligand contact to Mg(2+). Substrate-binding positions include 140–142, 186–188, glutamate 247, and 308–311; these read TID, MGR, and YELR. The active-site Proton acceptor is the aspartate 142.

Belongs to the phosphofructokinase type A (PFKA) family. PPi-dependent PFK group II subfamily. Clade 'Short' sub-subfamily. As to quaternary structure, homotetramer. Mg(2+) is required as a cofactor.

The protein resides in the cytoplasm. It catalyses the reaction beta-D-fructose 6-phosphate + diphosphate = beta-D-fructose 1,6-bisphosphate + phosphate + H(+). It functions in the pathway carbohydrate degradation; glycolysis; D-glyceraldehyde 3-phosphate and glycerone phosphate from D-glucose: step 3/4. With respect to regulation, non-allosteric. Functionally, catalyzes the phosphorylation of D-fructose 6-phosphate, the first committing step of glycolysis. Uses inorganic phosphate (PPi) as phosphoryl donor instead of ATP like common ATP-dependent phosphofructokinases (ATP-PFKs), which renders the reaction reversible, and can thus function both in glycolysis and gluconeogenesis. Consistently, PPi-PFK can replace the enzymes of both the forward (ATP-PFK) and reverse (fructose-bisphosphatase (FBPase)) reactions. This chain is Pyrophosphate--fructose 6-phosphate 1-phosphotransferase 3 (pfk3), found in Trichomonas vaginalis (strain ATCC PRA-98 / G3).